Consider the following 312-residue polypeptide: Small ribosomal subunit protein uS2m (312 aa).

This sequence belongs to the universal ribosomal protein uS2 family.

The protein localises to the mitochondrion. This Acanthamoeba castellanii (Amoeba) protein is Small ribosomal subunit protein uS2m (RPS2).